The following is a 259-amino-acid chain: Thiazole synthase (259 aa).

Residue K99 is the Schiff-base intermediate with DXP of the active site. 1-deoxy-D-xylulose 5-phosphate-binding positions include G160, 187-188 (AG), and 209-210 (NT).

It belongs to the ThiG family. Homotetramer. Forms heterodimers with either ThiH or ThiS.

The protein localises to the cytoplasm. The catalysed reaction is [ThiS sulfur-carrier protein]-C-terminal-Gly-aminoethanethioate + 2-iminoacetate + 1-deoxy-D-xylulose 5-phosphate = [ThiS sulfur-carrier protein]-C-terminal Gly-Gly + 2-[(2R,5Z)-2-carboxy-4-methylthiazol-5(2H)-ylidene]ethyl phosphate + 2 H2O + H(+). It participates in cofactor biosynthesis; thiamine diphosphate biosynthesis. In terms of biological role, catalyzes the rearrangement of 1-deoxy-D-xylulose 5-phosphate (DXP) to produce the thiazole phosphate moiety of thiamine. Sulfur is provided by the thiocarboxylate moiety of the carrier protein ThiS. In vitro, sulfur can be provided by H(2)S. In Solibacter usitatus (strain Ellin6076), this protein is Thiazole synthase.